The primary structure comprises 214 residues: UPF0111 protein MJ0629 (214 aa).

This sequence belongs to the UPF0111 family.

This Methanocaldococcus jannaschii (strain ATCC 43067 / DSM 2661 / JAL-1 / JCM 10045 / NBRC 100440) (Methanococcus jannaschii) protein is UPF0111 protein MJ0629.